A 374-amino-acid polypeptide reads, in one-letter code: Histidinol-phosphate aminotransferase 2 (374 aa).

An N6-(pyridoxal phosphate)lysine modification is found at Lys227.

It belongs to the class-II pyridoxal-phosphate-dependent aminotransferase family. Histidinol-phosphate aminotransferase subfamily. In terms of assembly, homodimer. Requires pyridoxal 5'-phosphate as cofactor.

The catalysed reaction is L-histidinol phosphate + 2-oxoglutarate = 3-(imidazol-4-yl)-2-oxopropyl phosphate + L-glutamate. It participates in amino-acid biosynthesis; L-histidine biosynthesis; L-histidine from 5-phospho-alpha-D-ribose 1-diphosphate: step 7/9. The protein is Histidinol-phosphate aminotransferase 2 (hisC2) of Ralstonia nicotianae (strain ATCC BAA-1114 / GMI1000) (Ralstonia solanacearum).